An 837-amino-acid chain; its full sequence is AdoMet-dependent rRNA methyltransferase SPB1 (837 aa).

S-adenosyl-L-methionine contacts are provided by glycine 58, tryptophan 60, aspartate 78, aspartate 94, and aspartate 119. The active-site Proton acceptor is the lysine 159. Residues 345–390 (LNEEEQIEKELRDLQEKQKQKQKREKRRKNEEKQKELTRMQMNMLT) adopt a coiled-coil conformation. 4 disordered regions span residues 359–381 (QEKQ…QKEL), 483–529 (FRAK…DEDD), 573–644 (TDDV…TTKE), and 779–808 (TKKQ…KGIK). The segment covering 372-381 (RKNEEKQKEL) has biased composition (basic and acidic residues). Acidic residues predominate over residues 518 to 529 (ESDDSELSDEDD). Basic and acidic residues predominate over residues 593–602 (SYNEMKKEDL). Positions 603–635 (SDSSDEDSSSESDFEIVANDESDGDIDSDYDSD) are enriched in acidic residues.

This sequence belongs to the class I-like SAM-binding methyltransferase superfamily. RNA methyltransferase RlmE family. SPB1 subfamily. In terms of assembly, component of the nucleolar and nucleoplasmic pre-60S ribosomal particle.

It is found in the nucleus. It localises to the nucleolus. It carries out the reaction a ribonucleotide in rRNA + S-adenosyl-L-methionine = a 2'-O-methylribonucleotide in rRNA + S-adenosyl-L-homocysteine + H(+). In terms of biological role, required for proper assembly of pre-ribosomal particles during the biogenesis of the 60S ribosomal subunit. The protein is AdoMet-dependent rRNA methyltransferase SPB1 of Candida glabrata (strain ATCC 2001 / BCRC 20586 / JCM 3761 / NBRC 0622 / NRRL Y-65 / CBS 138) (Yeast).